The following is a 302-amino-acid chain: Transmembrane protein 191C (302 aa).

2 disordered regions span residues 1–21 and 54–73; these read MAAT…GRQR and LRRR…EAAR. Positions 5–160 form a coiled coil; the sequence is QELLLQLQKD…EKLQQDALQT (156 aa). A helical membrane pass occupies residues 238–258; that stretch reads VLGALQVLLTLPLLFLGLSLL.

Belongs to the TMEM191 family.

The protein localises to the membrane. This Homo sapiens (Human) protein is Transmembrane protein 191C.